Reading from the N-terminus, the 84-residue chain is Trefoil factor 1 (84 aa).

A signal peptide spans 1–24; it reads MATMENKVICALVLVSMLALGTLA. In terms of domain architecture, P-type spans 29–72; it reads ETCTVAPRERQNCGFPGVTPSQCANKGCCFDDTVRGVPWCFYPN. Disulfide bonds link Cys31–Cys57, Cys41–Cys56, and Cys51–Cys68.

In terms of assembly, heterodimer with GKN2; disulfide linked. In terms of tissue distribution, found in stomach, with highest levels in the upper gastric mucosal cells (at protein level). Detected in goblet cells of the small and large intestine and rectum, small submucosal glands in the esophagus, mucous acini of the sublingual gland, submucosal glands of the trachea, and epithelial cells lining the exocrine pancreatic ducts but not in the remainder of the pancreas (at protein level). Scattered expression is detected in the epithelial cells of the gallbladder and submucosal glands of the vagina, and weak expression is observed in the bronchial goblet cells of the pseudostratified epithelia in the respiratory system (at protein level). Detected in urine (at protein level). Strongly expressed in breast cancer but at low levels in normal mammary tissue. It is regulated by estrogen in MCF-7 cells. Strong expression found in normal gastric mucosa and in the regenerative tissues surrounding ulcerous lesions of gastrointestinal tract, but lower expression found in gastric cancer (at protein level).

Its subcellular location is the secreted. Functionally, stabilizer of the mucous gel overlying the gastrointestinal mucosa that provides a physical barrier against various noxious agents. May inhibit the growth of calcium oxalate crystals in urine. In Homo sapiens (Human), this protein is Trefoil factor 1 (TFF1).